Reading from the N-terminus, the 223-residue chain is Phosphoglycolate phosphatase (223 aa).

Asp10 serves as the catalytic Nucleophile. Residues Asp10 and Asp12 each contribute to the Mg(2+) site. Lys149 provides a ligand contact to substrate. Mg(2+) contacts are provided by Asp172 and Asp176.

It belongs to the archaeal SPP-like hydrolase family. It depends on Mg(2+) as a cofactor.

It carries out the reaction 2-phosphoglycolate + H2O = glycolate + phosphate. Functionally, catalyzes the dephosphorylation of 2-phosphoglycolate. The sequence is that of Phosphoglycolate phosphatase from Archaeoglobus fulgidus (strain ATCC 49558 / DSM 4304 / JCM 9628 / NBRC 100126 / VC-16).